The sequence spans 257 residues: MADS-box transcription factor 1 (257 aa).

Positions 1 to 61 (MGRGKVELKR…GRLFEFSSSS (61 aa)) constitute an MADS-box domain. The K-box domain occupies 85 to 175 (NEINYQEYLK…RKKLQETSAE (91 aa)).

As to quaternary structure, may interact with the K-box of MADS6, MADS14 and MADS15.

It is found in the nucleus. In terms of biological role, probable transcription factor involved in the development of floral organs. Required for the formation of inner floral organs (lodicules, stamens and carpels, or whorls 2, 3 and 4) and the lemma and palea (whorl 1), which are grass floral organs analogous to sepals. May be involved in the control of flowering time. Seems to act as transcriptional activator. May act upstream of the auxin-responsive protein GH3.8. The protein is MADS-box transcription factor 1 (MADS1) of Oryza sativa subsp. indica (Rice).